A 272-amino-acid chain; its full sequence is Bis(5'-nucleosyl)-tetraphosphatase, symmetrical (272 aa).

It belongs to the Ap4A hydrolase family.

It catalyses the reaction P(1),P(4)-bis(5'-adenosyl) tetraphosphate + H2O = 2 ADP + 2 H(+). Hydrolyzes diadenosine 5',5'''-P1,P4-tetraphosphate to yield ADP. The chain is Bis(5'-nucleosyl)-tetraphosphatase, symmetrical from Glaesserella parasuis serovar 5 (strain SH0165) (Haemophilus parasuis).